The chain runs to 199 residues: Protein-L-isoaspartate O-methyltransferase (199 aa).

Residue S51 is part of the active site.

The protein belongs to the methyltransferase superfamily. L-isoaspartyl/D-aspartyl protein methyltransferase family.

It is found in the cytoplasm. The catalysed reaction is [protein]-L-isoaspartate + S-adenosyl-L-methionine = [protein]-L-isoaspartate alpha-methyl ester + S-adenosyl-L-homocysteine. In terms of biological role, catalyzes the methyl esterification of L-isoaspartyl residues in peptides and proteins that result from spontaneous decomposition of normal L-aspartyl and L-asparaginyl residues. It plays a role in the repair and/or degradation of damaged proteins. In Fervidobacterium nodosum (strain ATCC 35602 / DSM 5306 / Rt17-B1), this protein is Protein-L-isoaspartate O-methyltransferase.